Reading from the N-terminus, the 362-residue chain is sn-glycerol-3-phosphate import ATP-binding protein UgpC (362 aa).

The region spanning 4 to 235 (LSFRNVKKTY…PASTFVAGFI (232 aa)) is the ABC transporter domain. 37–44 (GPSGCGKS) contacts ATP.

Belongs to the ABC transporter superfamily. sn-glycerol-3-phosphate importer (TC 3.A.1.1.3) family. The complex is composed of two ATP-binding proteins (UgpC), two transmembrane proteins (UgpA and UgpE) and a solute-binding protein (UgpB).

The protein localises to the cell inner membrane. It catalyses the reaction sn-glycerol 3-phosphate(out) + ATP + H2O = sn-glycerol 3-phosphate(in) + ADP + phosphate + H(+). Its function is as follows. Part of the ABC transporter complex UgpBAEC involved in sn-glycerol-3-phosphate (G3P) import. Responsible for energy coupling to the transport system. The protein is sn-glycerol-3-phosphate import ATP-binding protein UgpC of Bordetella parapertussis (strain 12822 / ATCC BAA-587 / NCTC 13253).